Here is a 328-residue protein sequence, read N- to C-terminus: Phosphate acyltransferase (328 aa).

Belongs to the PlsX family. As to quaternary structure, homodimer. Probably interacts with PlsY.

Its subcellular location is the cytoplasm. It carries out the reaction a fatty acyl-[ACP] + phosphate = an acyl phosphate + holo-[ACP]. It participates in lipid metabolism; phospholipid metabolism. Its function is as follows. Catalyzes the reversible formation of acyl-phosphate (acyl-PO(4)) from acyl-[acyl-carrier-protein] (acyl-ACP). This enzyme utilizes acyl-ACP as fatty acyl donor, but not acyl-CoA. The chain is Phosphate acyltransferase from Mycoplasmoides gallisepticum (strain R(low / passage 15 / clone 2)) (Mycoplasma gallisepticum).